Here is a 222-residue protein sequence, read N- to C-terminus: MHPGVPEGPGVSEPGPRELCAFVSGAAAHMLRALQPRRTRPPKRRPNHRRFLHNQICRQFTKIEAATQRLALSILSQEAPPQRPSLQKPPPPPPSPFLGVACAVAPTEAPHASASLSLAALDTSTLDLFDNIALTPECASMPWDPSSGSDAPLPAPGLSHRDLGQLDLRQVPHFCGPLPLPQHALGEEADLVAPDWGWVDCWEVPRAWDSQGIPEGWGTSSP.

This is an uncharacterized protein from Homo sapiens (Human).